Here is a 1435-residue protein sequence, read N- to C-terminus: Gag-Pol polyprotein (1435 aa).

A lipid anchor (N-myristoyl glycine; by host) is attached at glycine 2. Residues 7–31 (VLSGGKLDSWEKIRLRPGGRKKYKL) are interaction with Gp41. The segment at 8-43 (LSGGKLDSWEKIRLRPGGRKKYKLKHIVWASRELGR) is interaction with host CALM1. Residues 12–19 (KLDSWEKI) form an interaction with host AP3D1 region. The tract at residues 14-33 (DSWEKIRLRPGGRKKYKLKH) is interaction with membrane phosphatidylinositol 4,5-bisphosphate and RNA. Residues 16 to 22 (WEKIRLR) carry the Nuclear export signal motif. Residues 26–32 (RKKYKLK) carry the Nuclear localization signal motif. The segment at 72-76 (EELRS) is interaction with membrane phosphatidylinositol 4,5-bisphosphate. A disordered region spans residues 107–126 (QKNSQQEIQQAAKNEGNSNP). Positions 108 to 126 (KNSQQEIQQAAKNEGNSNP) are enriched in polar residues. Tyrosine 131 bears the Phosphotyrosine; by host mark. Residues 188–226 (NTVGGHQAAMQMLKDTINDEAAEWDRIHPQQAGPIPPGQ) are interaction with human PPIA/CYPA and NUP153. Residues 276 to 362 (YSPVSILDIR…GGPSHKARVL (87 aa)) form a dimerization/Multimerization of capsid protein p24 region. 2 consecutive CCHC-type zinc fingers follow at residues 391–408 (IKCF…NCRA) and 412–429 (KGCW…ECTE). The tract at residues 444-478 (GEARKLSPEQDRANSPTSRELRIRRGDSPLPEAGA) is disordered. The span at 445 to 455 (EARKLSPEQDR) shows a compositional bias: basic and acidic residues. The segment at 489 to 493 (PQITL) is dimerization of protease. One can recognise a Peptidase A2 domain in the interval 508–577 (IEALLDTGAD…TPINIIGRNM (70 aa)). The active-site For protease activity; shared with dimeric partner is aspartate 513. Dimerization of protease stretches follow at residues 537 to 543 (GIGGFIK) and 576 to 588 (NMLT…LNFP). Positions 631 to 821 (EGKISKIGPE…PPFLWMGYEL (191 aa)) constitute a Reverse transcriptase domain. Residues aspartate 697, aspartate 772, and aspartate 773 each contribute to the Mg(2+) site. The RT 'primer grip' stretch occupies residues 814 to 822 (FLWMGYELH). Positions 985–1001 (WEVWWTEYWQAAWIPEW) match the Tryptophan repeat motif motif. Residues 1021–1144 (IPGAETYYVD…VDKLVSSGIR (124 aa)) enclose the RNase H type-1 domain. Residues aspartate 1030, glutamate 1065, aspartate 1085, and aspartate 1136 each coordinate Mg(2+). The Integrase-type zinc finger occupies 1150-1191 (DGIDKAQEEHERYHSNWRAMASDFNLPPVVAKEIVASCDKCQ). Zn(2+) contacts are provided by histidine 1159, histidine 1163, cysteine 1187, and cysteine 1190. The Integrase catalytic domain maps to 1201 to 1351 (VDCSPGIWQL…SAGERIIDII (151 aa)). Mg(2+) contacts are provided by aspartate 1211, aspartate 1263, and glutamate 1299. The segment at residues 1370–1417 (FRVYYRDSRDPIWKGPAKLLWKGEGAVVIQDNNEIKVVPRRKAKILKD) is a DNA-binding region (integrase-type).

In terms of assembly, homotrimer; further assembles as hexamers of trimers. Interacts with gp41 (via C-terminus). Interacts with host CALM1; this interaction induces a conformational change in the Matrix protein, triggering exposure of the myristate group. Interacts with host AP3D1; this interaction allows the polyprotein trafficking to multivesicular bodies during virus assembly. Part of the pre-integration complex (PIC) which is composed of viral genome, matrix protein, Vpr and integrase. As to quaternary structure, homodimer; the homodimer further multimerizes as homohexamers or homopentamers. Interacts with human PPIA/CYPA; This interaction stabilizes the capsid. Interacts with human NUP153. Interacts with host PDZD8; this interaction stabilizes the capsid. Interacts with monkey TRIM5; this interaction destabilizes the capsid. Homodimer, whose active site consists of two apposed aspartic acid residues. In terms of assembly, heterodimer of p66 RT and p51 RT (RT p66/p51). Heterodimerization of RT is essential for DNA polymerase activity. The overall folding of the subdomains is similar in p66 RT and p51 RT but the spatial arrangements of the subdomains are dramatically different. As to quaternary structure, homotetramer; may further associate as a homohexadecamer. Part of the pre-integration complex (PIC) which is composed of viral genome, matrix protein, Vpr and integrase. Interacts with human SMARCB1/INI1 and human PSIP1/LEDGF isoform 1. Interacts with human KPNA3; this interaction might play a role in nuclear import of the pre-integration complex. Interacts with human NUP153; this interaction might play a role in nuclear import of the pre-integration complex. Mg(2+) serves as cofactor. In terms of processing, specific enzymatic cleavages by the viral protease yield mature proteins. The protease is released by autocatalytic cleavage. The polyprotein is cleaved during and after budding, this process is termed maturation. Proteolytic cleavage of p66 RT removes the RNase H domain to yield the p51 RT subunit. Nucleocapsid protein p7 might be further cleaved after virus entry. Post-translationally, tyrosine phosphorylated presumably in the virion by a host kinase. Phosphorylation is apparently not a major regulator of membrane association. Phosphorylated possibly by host MAPK1; this phosphorylation is necessary for Pin1-mediated virion uncoating. In terms of processing, methylated by host PRMT6, impairing its function by reducing RNA annealing and the initiation of reverse transcription.

The protein resides in the host cell membrane. It localises to the host endosome. Its subcellular location is the host multivesicular body. The protein localises to the virion membrane. It is found in the host nucleus. The protein resides in the host cytoplasm. It localises to the virion. The catalysed reaction is Specific for a P1 residue that is hydrophobic, and P1' variable, but often Pro.. The enzyme catalyses Endohydrolysis of RNA in RNA/DNA hybrids. Three different cleavage modes: 1. sequence-specific internal cleavage of RNA. Human immunodeficiency virus type 1 and Moloney murine leukemia virus enzymes prefer to cleave the RNA strand one nucleotide away from the RNA-DNA junction. 2. RNA 5'-end directed cleavage 13-19 nucleotides from the RNA end. 3. DNA 3'-end directed cleavage 15-20 nucleotides away from the primer terminus.. It carries out the reaction 3'-end directed exonucleolytic cleavage of viral RNA-DNA hybrid.. It catalyses the reaction DNA(n) + a 2'-deoxyribonucleoside 5'-triphosphate = DNA(n+1) + diphosphate. Its activity is regulated as follows. Protease: The viral protease is inhibited by many synthetic protease inhibitors (PIs), such as amprenavir, atazanavir, indinavir, loprinavir, nelfinavir, ritonavir and saquinavir. Use of protease inhibitors in tritherapy regimens permit more ambitious therapeutic strategies. Reverse transcriptase/ribonuclease H: RT can be inhibited either by nucleoside RT inhibitors (NRTIs) or by non nucleoside RT inhibitors (NNRTIs). NRTIs act as chain terminators, whereas NNRTIs inhibit DNA polymerization by binding a small hydrophobic pocket near the RT active site and inducing an allosteric change in this region. Classical NRTIs are abacavir, adefovir (PMEA), didanosine (ddI), lamivudine (3TC), stavudine (d4T), tenofovir (PMPA), zalcitabine (ddC), and zidovudine (AZT). Classical NNRTIs are atevirdine (BHAP U-87201E), delavirdine, efavirenz (DMP-266), emivirine (I-EBU), and nevirapine (BI-RG-587). The tritherapies used as a basic effective treatment of AIDS associate two NRTIs and one NNRTI. Mediates, with Gag polyprotein, the essential events in virion assembly, including binding the plasma membrane, making the protein-protein interactions necessary to create spherical particles, recruiting the viral Env proteins, and packaging the genomic RNA via direct interactions with the RNA packaging sequence (Psi). Gag-Pol polyprotein may regulate its own translation, by the binding genomic RNA in the 5'-UTR. At low concentration, the polyprotein would promote translation, whereas at high concentration, the polyprotein would encapsidate genomic RNA and then shut off translation. Its function is as follows. Targets the polyprotein to the plasma membrane via a multipartite membrane-binding signal, that includes its myristoylated N-terminus. Matrix protein is part of the pre-integration complex. Implicated in the release from host cell mediated by Vpu. Binds to RNA. In terms of biological role, forms the conical core that encapsulates the genomic RNA-nucleocapsid complex in the virion. Most core are conical, with only 7% tubular. The core is constituted by capsid protein hexamer subunits. The core is disassembled soon after virion entry. Host restriction factors such as TRIM5-alpha or TRIMCyp bind retroviral capsids and cause premature capsid disassembly, leading to blocks in reverse transcription. Capsid restriction by TRIM5 is one of the factors which restricts HIV-1 to the human species. Host PIN1 apparently facilitates the virion uncoating. On the other hand, interactions with PDZD8 or CYPA stabilize the capsid. Functionally, encapsulates and protects viral dimeric unspliced genomic RNA (gRNA). Binds these RNAs through its zinc fingers. Acts as a nucleic acid chaperone which is involved in rearangement of nucleic acid secondary structure during gRNA retrotranscription. Also facilitates template switch leading to recombination. As part of the polyprotein, participates in gRNA dimerization, packaging, tRNA incorporation and virion assembly. Aspartyl protease that mediates proteolytic cleavages of Gag and Gag-Pol polyproteins during or shortly after the release of the virion from the plasma membrane. Cleavages take place as an ordered, step-wise cascade to yield mature proteins. This process is called maturation. Displays maximal activity during the budding process just prior to particle release from the cell. Also cleaves Nef and Vif, probably concomitantly with viral structural proteins on maturation of virus particles. Hydrolyzes host EIF4GI and PABP1 in order to shut off the capped cellular mRNA translation. The resulting inhibition of cellular protein synthesis serves to ensure maximal viral gene expression and to evade host immune response. Also mediates cleavage of host YTHDF3. Mediates cleavage of host CARD8, thereby activating the CARD8 inflammasome, leading to the clearance of latent HIV-1 in patient CD4(+) T-cells after viral reactivation; in contrast, HIV-1 can evade CARD8-sensing when its protease remains inactive in infected cells prior to viral budding. Its function is as follows. Multifunctional enzyme that converts the viral RNA genome into dsDNA in the cytoplasm, shortly after virus entry into the cell. This enzyme displays a DNA polymerase activity that can copy either DNA or RNA templates, and a ribonuclease H (RNase H) activity that cleaves the RNA strand of RNA-DNA heteroduplexes in a partially processive 3' to 5' endonucleasic mode. Conversion of viral genomic RNA into dsDNA requires many steps. A tRNA(3)-Lys binds to the primer-binding site (PBS) situated at the 5'-end of the viral RNA. RT uses the 3' end of the tRNA primer to perform a short round of RNA-dependent minus-strand DNA synthesis. The reading proceeds through the U5 region and ends after the repeated (R) region which is present at both ends of viral RNA. The portion of the RNA-DNA heteroduplex is digested by the RNase H, resulting in a ssDNA product attached to the tRNA primer. This ssDNA/tRNA hybridizes with the identical R region situated at the 3' end of viral RNA. This template exchange, known as minus-strand DNA strong stop transfer, can be either intra- or intermolecular. RT uses the 3' end of this newly synthesized short ssDNA to perform the RNA-dependent minus-strand DNA synthesis of the whole template. RNase H digests the RNA template except for two polypurine tracts (PPTs) situated at the 5'-end and near the center of the genome. It is not clear if both polymerase and RNase H activities are simultaneous. RNase H probably can proceed both in a polymerase-dependent (RNA cut into small fragments by the same RT performing DNA synthesis) and a polymerase-independent mode (cleavage of remaining RNA fragments by free RTs). Secondly, RT performs DNA-directed plus-strand DNA synthesis using the PPTs that have not been removed by RNase H as primers. PPTs and tRNA primers are then removed by RNase H. The 3' and 5' ssDNA PBS regions hybridize to form a circular dsDNA intermediate. Strand displacement synthesis by RT to the PBS and PPT ends produces a blunt ended, linear dsDNA copy of the viral genome that includes long terminal repeats (LTRs) at both ends. In terms of biological role, catalyzes viral DNA integration into the host chromosome, by performing a series of DNA cutting and joining reactions. This enzyme activity takes place after virion entry into a cell and reverse transcription of the RNA genome in dsDNA. The first step in the integration process is 3' processing. This step requires a complex comprising the viral genome, matrix protein, Vpr and integrase. This complex is called the pre-integration complex (PIC). The integrase protein removes 2 nucleotides from each 3' end of the viral DNA, leaving recessed CA OH's at the 3' ends. In the second step, the PIC enters cell nucleus. This process is mediated through integrase and Vpr proteins, and allows the virus to infect a non dividing cell. This ability to enter the nucleus is specific of lentiviruses, other retroviruses cannot and rely on cell division to access cell chromosomes. In the third step, termed strand transfer, the integrase protein joins the previously processed 3' ends to the 5' ends of strands of target cellular DNA at the site of integration. The 5'-ends are produced by integrase-catalyzed staggered cuts, 5 bp apart. A Y-shaped, gapped, recombination intermediate results, with the 5'-ends of the viral DNA strands and the 3' ends of target DNA strands remaining unjoined, flanking a gap of 5 bp. The last step is viral DNA integration into host chromosome. This involves host DNA repair synthesis in which the 5 bp gaps between the unjoined strands are filled in and then ligated. Since this process occurs at both cuts flanking the HIV genome, a 5 bp duplication of host DNA is produced at the ends of HIV-1 integration. Alternatively, Integrase may catalyze the excision of viral DNA just after strand transfer, this is termed disintegration. The sequence is that of Gag-Pol polyprotein (gag-pol) from Human immunodeficiency virus type 1 group M subtype G (isolate 92NG083) (HIV-1).